A 154-amino-acid chain; its full sequence is Ribosome maturation factor RimP (154 aa).

The protein belongs to the RimP family.

It localises to the cytoplasm. Functionally, required for maturation of 30S ribosomal subunits. The polypeptide is Ribosome maturation factor RimP (Clostridium perfringens (strain SM101 / Type A)).